We begin with the raw amino-acid sequence, 457 residues long: Solute carrier family 38 member 6 (457 aa).

N-acetylmethionine is present on methionine 1. Phosphoserine occurs at positions 4 and 7. Helical transmembrane passes span 48–68 (FGLS…LGLA), 70–90 (VMAN…ALLA), 112–132 (LGLF…IIIQ), 171–191 (LLII…KIGF), and 192–212 (LGYT…VVVI). A disulfide bond links cysteine 219 and cysteine 239. Asparagine 234 carries an N-linked (GlcNAc...) asparagine glycan. Residues 251 to 271 (VYAIPTMAFSFLCHTSVLPIY) traverse the membrane as a helical segment. Residue asparagine 284 is glycosylated (N-linked (GlcNAc...) asparagine). 5 consecutive transmembrane segments (helical) span residues 289-309 (AIAL…LTFY), 328-348 (AAVM…VPLI), 372-392 (SLTT…VPDI), 395-415 (VFGV…PGLF), and 432-452 (ALSL…LIIL).

Belongs to the amino acid/polyamine transporter 2 family.

It is found in the cell membrane. Its subcellular location is the synapse. The enzyme catalyses L-glutamine(out) = L-glutamine(in). It carries out the reaction L-glutamate(out) = L-glutamate(in). Its function is as follows. Amino acid transporter with an apparent selectivity for L-glutamine and L-glutamate. May facilitate glutamine uptake in excitatory neurons. The transport mechanism remains to be elucidated. This chain is Solute carrier family 38 member 6, found in Rattus norvegicus (Rat).